The primary structure comprises 238 residues: UPF0280 protein Mboo_1274 (238 aa).

Belongs to the UPF0280 family.

This Methanoregula boonei (strain DSM 21154 / JCM 14090 / 6A8) protein is UPF0280 protein Mboo_1274.